The primary structure comprises 67 residues: Conotoxin AbVIM (67 aa).

Positions 1-17 are cleaved as a signal peptide; sequence VLIIAVLFLTACQLIAT. Positions 18-40 are excised as a propeptide; the sequence is ASYARSERKHPDLRLSSRNSKLS. Intrachain disulfides connect cysteine 43–cysteine 57, cysteine 50–cysteine 61, and cysteine 56–cysteine 66.

The protein belongs to the conotoxin O1 superfamily. In terms of tissue distribution, expressed by the venom duct.

The protein resides in the secreted. The protein is Conotoxin AbVIM of Conus abbreviatus (Abbreviated cone).